The chain runs to 219 residues: MDGLVGRKLGMTRIINEEGIMIAVTMIEILPHYVTQVKNKEKDGYCAVQVTTGNTRDKCLNKPKLGHLKKLGINYGKGLWEFRLNDSNRLISVGDIFTLKVLKCINKVDVTGISKGKGFAGAVKRWNFRTQDASHGNSLSHRAPGSIGQNQTPGKVFKGKKMAGHLGYEKATIQNLAVINIDIKNNLLLVKGAIPGVIGENVIVKRSVKIGYFKEMSSI.

Glutamine 151 carries the N5-methylglutamine modification.

This sequence belongs to the universal ribosomal protein uL3 family. In terms of assembly, part of the 50S ribosomal subunit. Forms a cluster with proteins L14 and L19. In terms of processing, methylated by PrmB.

Its function is as follows. One of the primary rRNA binding proteins, it binds directly near the 3'-end of the 23S rRNA, where it nucleates assembly of the 50S subunit. The polypeptide is Large ribosomal subunit protein uL3 (Blochmanniella floridana).